The primary structure comprises 130 residues: Glycine cleavage system H protein (130 aa).

Residues 25–107 (IATIGITEFA…YGEGWFLKVR (83 aa)) enclose the Lipoyl-binding domain. The residue at position 66 (Lys66) is an N6-lipoyllysine.

It belongs to the GcvH family. The glycine cleavage system is composed of four proteins: P, T, L and H. (R)-lipoate serves as cofactor.

Functionally, the glycine cleavage system catalyzes the degradation of glycine. The H protein shuttles the methylamine group of glycine from the P protein to the T protein. In Nostoc sp. (strain PCC 7120 / SAG 25.82 / UTEX 2576), this protein is Glycine cleavage system H protein.